We begin with the raw amino-acid sequence, 406 residues long: Tyrosine--tRNA ligase (406 aa).

L-tyrosine is bound at residue tyrosine 35. Positions proline 40–histidine 49 match the 'HIGH' region motif. L-tyrosine contacts are provided by tyrosine 168 and glutamine 172. The 'KMSKS' region motif lies at lysine 228–threonine 232. Position 231 (lysine 231) interacts with ATP. The S4 RNA-binding domain occupies leucine 340–glutamate 404.

This sequence belongs to the class-I aminoacyl-tRNA synthetase family. TyrS type 1 subfamily. Homodimer.

It is found in the cytoplasm. It catalyses the reaction tRNA(Tyr) + L-tyrosine + ATP = L-tyrosyl-tRNA(Tyr) + AMP + diphosphate + H(+). In terms of biological role, catalyzes the attachment of tyrosine to tRNA(Tyr) in a two-step reaction: tyrosine is first activated by ATP to form Tyr-AMP and then transferred to the acceptor end of tRNA(Tyr). This chain is Tyrosine--tRNA ligase, found in Clostridium beijerinckii (strain ATCC 51743 / NCIMB 8052) (Clostridium acetobutylicum).